A 738-amino-acid polypeptide reads, in one-letter code: 1,4-alpha-glucan branching enzyme GlgB (738 aa).

The Nucleophile role is filled by D417. The active-site Proton donor is the E472.

Belongs to the glycosyl hydrolase 13 family. GlgB subfamily. As to quaternary structure, monomer.

The enzyme catalyses Transfers a segment of a (1-&gt;4)-alpha-D-glucan chain to a primary hydroxy group in a similar glucan chain.. It participates in glycan biosynthesis; glycogen biosynthesis. In terms of biological role, catalyzes the formation of the alpha-1,6-glucosidic linkages in glycogen by scission of a 1,4-alpha-linked oligosaccharide from growing alpha-1,4-glucan chains and the subsequent attachment of the oligosaccharide to the alpha-1,6 position. The sequence is that of 1,4-alpha-glucan branching enzyme GlgB from Burkholderia pseudomallei (strain 1106a).